A 319-amino-acid polypeptide reads, in one-letter code: Acetyl-coenzyme A carboxylase carboxyl transferase subunit alpha (319 aa).

The region spanning 35–296 (DLDKEIEQLE…KANLLRQLED (262 aa)) is the CoA carboxyltransferase C-terminal domain.

Belongs to the AccA family. Acetyl-CoA carboxylase is a heterohexamer composed of biotin carboxyl carrier protein (AccB), biotin carboxylase (AccC) and two subunits each of ACCase subunit alpha (AccA) and ACCase subunit beta (AccD).

The protein localises to the cytoplasm. The enzyme catalyses N(6)-carboxybiotinyl-L-lysyl-[protein] + acetyl-CoA = N(6)-biotinyl-L-lysyl-[protein] + malonyl-CoA. It functions in the pathway lipid metabolism; malonyl-CoA biosynthesis; malonyl-CoA from acetyl-CoA: step 1/1. Its function is as follows. Component of the acetyl coenzyme A carboxylase (ACC) complex. First, biotin carboxylase catalyzes the carboxylation of biotin on its carrier protein (BCCP) and then the CO(2) group is transferred by the carboxyltransferase to acetyl-CoA to form malonyl-CoA. This is Acetyl-coenzyme A carboxylase carboxyl transferase subunit alpha from Vibrio campbellii (strain ATCC BAA-1116).